A 656-amino-acid polypeptide reads, in one-letter code: uncharacterized protein (656 aa).

Disordered stretches follow at residues 1 to 41 (MMAT…ESEG) and 60 to 88 (SNKV…HNLE). Positions 22–36 (SDSSDSGSDVSFFSV) are enriched in low complexity. Ser39 carries the phosphoserine modification. Basic and acidic residues predominate over residues 62-78 (KVEKDSDSEQRGRKKET).

It localises to the cytoplasm. The protein resides in the mitochondrion. This is an uncharacterized protein from Saccharomyces cerevisiae (strain ATCC 204508 / S288c) (Baker's yeast).